We begin with the raw amino-acid sequence, 690 residues long: Eukaryotic translation initiation factor 3 subunit B (690 aa).

Positions M1–G11 are enriched in basic and acidic residues. The tract at residues M1–S36 is disordered. Acidic residues predominate over residues N15 to F25. Positions S57–D141 constitute an RRM domain. 5 WD repeats span residues T207–K246, D293–L331, I334–E369, E442–L484, and P530–T575. The stretch at E595 to R645 forms a coiled coil.

Belongs to the eIF-3 subunit B family. As to quaternary structure, component of the eukaryotic translation initiation factor 3 (eIF-3) complex. The eIF-3 complex interacts with pix. Interacts with mxt.

Its subcellular location is the cytoplasm. Functionally, RNA-binding component of the eukaryotic translation initiation factor 3 (eIF-3) complex, which is involved in protein synthesis of a specialized repertoire of mRNAs and, together with other initiation factors, stimulates binding of mRNA and methionyl-tRNAi to the 40S ribosome. The eIF-3 complex specifically targets and initiates translation of a subset of mRNAs involved in cell proliferation. This Drosophila erecta (Fruit fly) protein is Eukaryotic translation initiation factor 3 subunit B.